A 375-amino-acid chain; its full sequence is Succinyl-diaminopimelate desuccinylase (375 aa).

Histidine 66 contributes to the Zn(2+) binding site. Aspartate 68 is an active-site residue. Aspartate 99 provides a ligand contact to Zn(2+). Catalysis depends on glutamate 133, which acts as the Proton acceptor. Zn(2+) contacts are provided by glutamate 134, glutamate 162, and histidine 348.

This sequence belongs to the peptidase M20A family. DapE subfamily. As to quaternary structure, homodimer. Requires Zn(2+) as cofactor. The cofactor is Co(2+).

It catalyses the reaction N-succinyl-(2S,6S)-2,6-diaminopimelate + H2O = (2S,6S)-2,6-diaminopimelate + succinate. The protein operates within amino-acid biosynthesis; L-lysine biosynthesis via DAP pathway; LL-2,6-diaminopimelate from (S)-tetrahydrodipicolinate (succinylase route): step 3/3. Catalyzes the hydrolysis of N-succinyl-L,L-diaminopimelic acid (SDAP), forming succinate and LL-2,6-diaminopimelate (DAP), an intermediate involved in the bacterial biosynthesis of lysine and meso-diaminopimelic acid, an essential component of bacterial cell walls. The protein is Succinyl-diaminopimelate desuccinylase of Erwinia tasmaniensis (strain DSM 17950 / CFBP 7177 / CIP 109463 / NCPPB 4357 / Et1/99).